Reading from the N-terminus, the 585-residue chain is MFRTHTCGELRISDVNKQVKLSGWVQRSRKMGGMTFVDLRDRYGITQLVFNEEIDAELCERANKLGREFVIQIVGTVNERFSKNSHIPTGDIEIIVSELNILNSAITPPFTIEDNTDGGDDIRMKYRYLDLRRSAVRSNLELRHKMTIEVRSYLDKLGFLEVETPVLIGSTPEGARDFVVPSRMNPGQFYALPQSPQTLKQLLMVSGFDRYFQIAKCFRDEDLRADRQPEFTQIDCEMSFVEQEDVITTFEGMAKHLFKVIRNIELTEPFPRMPWSEAMRLYGSDKPDIRFGMQFVELMDILKGHGFSVFDNATYIGGICAEGAAGYTRKQLDALTEFVKKPQIGAKGMVYARIEADGTVKSSVDKFYTQEVLQQLKEAFGAKPGDLILILSGDDAMKTRKQLCELRLEMGNQLGLRDKNTFACLWVVDFPLFEWSEEEGRLMAMHHPFTSPKPEDIHLLDTNPAAVRANAYDMVINGVEVGGGSIRIHDSQLQNKMFELLGFTPERAQEQFGFLMNAFKFGAPPHGGLAYGLDRWVSLFAGLDSIRDCIAFPKNNSGRDVMLDAPAALDPSQLEELNLIVDIKE.

Residue Glu-173 coordinates L-aspartate. Positions 197 to 200 (QTLK) are aspartate. Residue Arg-219 participates in L-aspartate binding. ATP contacts are provided by residues 219-221 (RDE) and Gln-228. Residue His-446 participates in L-aspartate binding. Residue Glu-480 participates in ATP binding. Arg-487 is a binding site for L-aspartate. Position 532–535 (532–535 (GLDR)) interacts with ATP.

It belongs to the class-II aminoacyl-tRNA synthetase family. Type 1 subfamily. As to quaternary structure, homodimer.

The protein localises to the cytoplasm. It catalyses the reaction tRNA(Asp) + L-aspartate + ATP = L-aspartyl-tRNA(Asp) + AMP + diphosphate. Catalyzes the attachment of L-aspartate to tRNA(Asp) in a two-step reaction: L-aspartate is first activated by ATP to form Asp-AMP and then transferred to the acceptor end of tRNA(Asp). This is Aspartate--tRNA ligase from Bacteroides fragilis (strain ATCC 25285 / DSM 2151 / CCUG 4856 / JCM 11019 / LMG 10263 / NCTC 9343 / Onslow / VPI 2553 / EN-2).